We begin with the raw amino-acid sequence, 380 residues long: Probable G-protein coupled receptor 132 (380 aa).

The Extracellular portion of the chain corresponds to 1–45; sequence MCPMLLKNGYNGNATPVTTTAPWASLGLSAKTCNNVSFEESRIVL. An N-linked (GlcNAc...) asparagine glycan is attached at Asn35. Residues 46 to 68 form a helical membrane-spanning segment; that stretch reads VVVYSAVCTLGVPANCLTAWLAL. At 69–79 the chain is on the cytoplasmic side; that stretch reads LQVLQGNVLAV. The chain crosses the membrane as a helical span at residues 80-102; the sequence is YLLCLALCELLYTGTLPLWVIYI. Residues 103 to 116 are Extracellular-facing; sequence RNQHRWTLGLLACK. Residues Cys115 and Cys186 are joined by a disulfide bond. Residues 117-138 traverse the membrane as a helical segment; it reads VTAYIFFCNIYVSILFLCCISC. Residues 139 to 158 lie on the Cytoplasmic side of the membrane; the sequence is DRFVAVVYALESRGRRRRRT. The chain crosses the membrane as a helical span at residues 159-178; sequence AILISACIFILVGIVHYPVF. Residues 179 to 197 lie on the Extracellular side of the membrane; sequence QTEDKETCFDMLQMDSRIA. Residues 198 to 220 form a helical membrane-spanning segment; it reads GYYYARFTVGFAIPLSIIAFTNH. Topologically, residues 221–246 are cytoplasmic; the sequence is RIFRSIKQSMGLSAAQKAKVKHSAIA. Residues 247-269 traverse the membrane as a helical segment; that stretch reads VVVIFLVCFAPYHLVLLVKAAAF. At 270-288 the chain is on the extracellular side; it reads SYYRGDRNAMCGLEERLYT. The chain crosses the membrane as a helical span at residues 289–311; sequence ASVVFLCLSTVNGVADPIIYVLA. Topologically, residues 312-380 are cytoplasmic; sequence TDHSRQEVSR…PAKRLIEESC (69 aa).

This sequence belongs to the G-protein coupled receptor 1 family. In terms of tissue distribution, highly expressed in macrophages and hematopoietic tissues rich in lymphocytes, like spleen and thymus. Weakly expressed in heart and lung. In atherosclerotic plaques, expression is observed around the lipid core and at the shoulder region.

Its subcellular location is the cell membrane. Its function is as follows. May be a receptor for oxidized free fatty acids derived from linoleic and arachidonic acids such as 9-hydroxyoctadecadienoic acid (9-HODE). Activates a G alpha protein, most likely G alpha(q). May be involved in apoptosis. Functions at the G2/M checkpoint to delay mitosis. May function as a sensor that monitors the oxidative states and mediates appropriate cellular responses such as secretion of paracrine signals and attenuation of proliferation. May mediate ths accumulation of intracellular inositol phosphates at acidic pH through proton-sensing activity. This chain is Probable G-protein coupled receptor 132 (GPR132), found in Homo sapiens (Human).